Reading from the N-terminus, the 497-residue chain is Glycerol kinase (497 aa).

Position 11 (T11) interacts with ADP. The ATP site is built by T11, T12, and S13. T11 is a binding site for sn-glycerol 3-phosphate. R15 contacts ADP. R81, E82, Y134, and D244 together coordinate sn-glycerol 3-phosphate. The glycerol site is built by R81, E82, Y134, D244, and Q245. Positions 266 and 309 each coordinate ADP. Residues T266, G309, Q313, and G410 each coordinate ATP. ADP is bound by residues G410 and N414.

It belongs to the FGGY kinase family.

The catalysed reaction is glycerol + ATP = sn-glycerol 3-phosphate + ADP + H(+). The protein operates within polyol metabolism; glycerol degradation via glycerol kinase pathway; sn-glycerol 3-phosphate from glycerol: step 1/1. Inhibited by fructose 1,6-bisphosphate (FBP). In terms of biological role, key enzyme in the regulation of glycerol uptake and metabolism. Catalyzes the phosphorylation of glycerol to yield sn-glycerol 3-phosphate. The protein is Glycerol kinase of Fusobacterium nucleatum subsp. nucleatum (strain ATCC 25586 / DSM 15643 / BCRC 10681 / CIP 101130 / JCM 8532 / KCTC 2640 / LMG 13131 / VPI 4355).